Reading from the N-terminus, the 597-residue chain is Elongation factor 4 (597 aa).

One can recognise a tr-type G domain in the interval 2-184; that stretch reads KNIRNFSIIA…EIVAKIPAPT (183 aa). Residues 14-19 and 131-134 each bind GTP; these read DHGKST and NKID.

This sequence belongs to the TRAFAC class translation factor GTPase superfamily. Classic translation factor GTPase family. LepA subfamily.

It localises to the cell inner membrane. The catalysed reaction is GTP + H2O = GDP + phosphate + H(+). Its function is as follows. Required for accurate and efficient protein synthesis under certain stress conditions. May act as a fidelity factor of the translation reaction, by catalyzing a one-codon backward translocation of tRNAs on improperly translocated ribosomes. Back-translocation proceeds from a post-translocation (POST) complex to a pre-translocation (PRE) complex, thus giving elongation factor G a second chance to translocate the tRNAs correctly. Binds to ribosomes in a GTP-dependent manner. The polypeptide is Elongation factor 4 (Neisseria meningitidis serogroup C / serotype 2a (strain ATCC 700532 / DSM 15464 / FAM18)).